A 481-amino-acid chain; its full sequence is N-succinylglutamate 5-semialdehyde dehydrogenase (481 aa).

Position 206–211 (206–211 (GSARTG)) interacts with NAD(+). Active-site residues include E229 and C263.

Belongs to the aldehyde dehydrogenase family. AstD subfamily.

It catalyses the reaction N-succinyl-L-glutamate 5-semialdehyde + NAD(+) + H2O = N-succinyl-L-glutamate + NADH + 2 H(+). The protein operates within amino-acid degradation; L-arginine degradation via AST pathway; L-glutamate and succinate from L-arginine: step 4/5. Functionally, catalyzes the NAD-dependent reduction of succinylglutamate semialdehyde into succinylglutamate. The chain is N-succinylglutamate 5-semialdehyde dehydrogenase from Sphingopyxis alaskensis (strain DSM 13593 / LMG 18877 / RB2256) (Sphingomonas alaskensis).